We begin with the raw amino-acid sequence, 657 residues long: Knob-associated histidine-rich protein (657 aa).

The first 34 residues, 1–34 (MKSFKNKNTLRRKKAFPVFTKILLVSFLVWVLKC), serve as a signal peptide directing secretion. Asparagine 42 carries an N-linked (GlcNAc...) asparagine glycan. The span at 57-76 (AQKQHEHHHHHHHHHHHQHQ) shows a compositional bias: basic residues. Disordered stretches follow at residues 57–138 (AQKQ…PSNE), 282–301 (AHDGSHGNLRGHDNKGSEGY), and 352–657 (VNKY…GCCG). Residues 99–108 (PQVHQQVHGQ) are compositionally biased toward low complexity. The segment covering 112 to 123 (HHHHHHHHHHLH) has biased composition (basic residues). Composition is skewed to basic and acidic residues over residues 357 to 378 (KHGDEKHHSSKKHEGNDGEGEK) and 399 to 408 (KDNEDAESVK). Basic residues predominate over residues 409–425 (SKKHKSHDCEKKKSKKH). Residues 426–435 (KDNEDAESVK) are compositionally biased toward basic and acidic residues. Residues 453–468 (AAKKLTKKIKIKKKTN) are compositionally biased toward basic residues. The segment covering 473-496 (DGSKAHEKKENETKNTAGENKKVD) has biased composition (basic and acidic residues). A compositionally biased stretch (polar residues) spans 497-508 (STSADNKSTNAA). Composition is skewed to basic and acidic residues over residues 512-523 (AKDKTQGGKTDK) and 551-578 (STSKEATKEASTSKEATKEASTSKEATK). Residues 590–614 (ASTTEGATKGASTTAGSTTGATTGA) show a composition bias toward low complexity. The span at 628–643 (AANNGEQVMSRGQAQL) shows a compositional bias: polar residues. Basic residues predominate over residues 648–657 (KKKKKRGCCG).

It localises to the secreted. In terms of biological role, KAHRP might mimick human histidine-rich glycoproteins to anchor host thrombospondin or a parasite analog in a binding complex with the endothelial cell receptor. The chain is Knob-associated histidine-rich protein (SD17) from Plasmodium falciparum (isolate NF7 / Ghana).